The chain runs to 697 residues: Elongation factor G 2 (697 aa).

The tr-type G domain maps to 5–280; that stretch reads SKYRNIGIFA…AVVDYLPAPD (276 aa). GTP-binding positions include 14-21, 78-82, and 132-135; these read AHVDAGKT, DTPGH, and NKLD.

The protein belongs to the TRAFAC class translation factor GTPase superfamily. Classic translation factor GTPase family. EF-G/EF-2 subfamily.

It localises to the cytoplasm. Functionally, catalyzes the GTP-dependent ribosomal translocation step during translation elongation. During this step, the ribosome changes from the pre-translocational (PRE) to the post-translocational (POST) state as the newly formed A-site-bound peptidyl-tRNA and P-site-bound deacylated tRNA move to the P and E sites, respectively. Catalyzes the coordinated movement of the two tRNA molecules, the mRNA and conformational changes in the ribosome. This is Elongation factor G 2 (fusB) from Shewanella oneidensis (strain ATCC 700550 / JCM 31522 / CIP 106686 / LMG 19005 / NCIMB 14063 / MR-1).